The following is a 256-amino-acid chain: Type III pantothenate kinase (256 aa).

An ATP-binding site is contributed by Asp-6–Val-13. Gly-107 to Ile-110 provides a ligand contact to substrate. The Proton acceptor role is filled by Asp-109. Residue Asp-129 participates in K(+) binding. An ATP-binding site is contributed by Thr-132. Thr-184 contacts substrate.

This sequence belongs to the type III pantothenate kinase family. Homodimer. NH4(+) is required as a cofactor. K(+) serves as cofactor.

The protein resides in the cytoplasm. It catalyses the reaction (R)-pantothenate + ATP = (R)-4'-phosphopantothenate + ADP + H(+). It participates in cofactor biosynthesis; coenzyme A biosynthesis; CoA from (R)-pantothenate: step 1/5. Functionally, catalyzes the phosphorylation of pantothenate (Pan), the first step in CoA biosynthesis. This chain is Type III pantothenate kinase, found in Bifidobacterium longum (strain DJO10A).